A 195-amino-acid chain; its full sequence is Holliday junction branch migration complex subunit RuvA (195 aa).

The segment at 1–63 (MIASVRGEVL…EDSQTLYGFA (63 aa)) is domain I. The tract at residues 64 to 138 (DSDARDLFLT…DKVGSSTSSG (75 aa)) is domain II. The segment at 138 to 142 (GVAAA) is flexible linker. The interval 143–195 (GGHGIRGPVVEALVGLGFAVKQAEEATDKVLANDPEATTSSALRAALSMLGKK) is domain III.

It belongs to the RuvA family. In terms of assembly, homotetramer. Forms an RuvA(8)-RuvB(12)-Holliday junction (HJ) complex. HJ DNA is sandwiched between 2 RuvA tetramers; dsDNA enters through RuvA and exits via RuvB. An RuvB hexamer assembles on each DNA strand where it exits the tetramer. Each RuvB hexamer is contacted by two RuvA subunits (via domain III) on 2 adjacent RuvB subunits; this complex drives branch migration. In the full resolvosome a probable DNA-RuvA(4)-RuvB(12)-RuvC(2) complex forms which resolves the HJ.

It localises to the cytoplasm. In terms of biological role, the RuvA-RuvB-RuvC complex processes Holliday junction (HJ) DNA during genetic recombination and DNA repair, while the RuvA-RuvB complex plays an important role in the rescue of blocked DNA replication forks via replication fork reversal (RFR). RuvA specifically binds to HJ cruciform DNA, conferring on it an open structure. The RuvB hexamer acts as an ATP-dependent pump, pulling dsDNA into and through the RuvAB complex. HJ branch migration allows RuvC to scan DNA until it finds its consensus sequence, where it cleaves and resolves the cruciform DNA. This chain is Holliday junction branch migration complex subunit RuvA, found in Mycolicibacterium gilvum (strain PYR-GCK) (Mycobacterium gilvum (strain PYR-GCK)).